The primary structure comprises 259 residues: GTP cyclohydrolase FolE2 (259 aa).

This sequence belongs to the GTP cyclohydrolase IV family.

It carries out the reaction GTP + H2O = 7,8-dihydroneopterin 3'-triphosphate + formate + H(+). Its pathway is cofactor biosynthesis; 7,8-dihydroneopterin triphosphate biosynthesis; 7,8-dihydroneopterin triphosphate from GTP: step 1/1. Converts GTP to 7,8-dihydroneopterin triphosphate. The polypeptide is GTP cyclohydrolase FolE2 (Thermosipho africanus (strain TCF52B)).